The primary structure comprises 294 residues: Urease accessory protein UreD 1 (294 aa).

Residues 1–22 form a disordered region; sequence MALSLDGLPEKPAPAEAPSPPV. Residues 11 to 21 are compositionally biased toward pro residues; it reads KPAPAEAPSPP.

Belongs to the UreD family. In terms of assembly, ureD, UreF and UreG form a complex that acts as a GTP-hydrolysis-dependent molecular chaperone, activating the urease apoprotein by helping to assemble the nickel containing metallocenter of UreC. The UreE protein probably delivers the nickel.

The protein resides in the cytoplasm. Functionally, required for maturation of urease via the functional incorporation of the urease nickel metallocenter. This Methylorubrum extorquens (strain PA1) (Methylobacterium extorquens) protein is Urease accessory protein UreD 1.